We begin with the raw amino-acid sequence, 408 residues long: Imidazolonepropionase (408 aa).

Fe(3+) contacts are provided by H72 and H74. Positions 72 and 74 each coordinate Zn(2+). R81, Y144, and H177 together coordinate 4-imidazolone-5-propanoate. Y144 contributes to the N-formimidoyl-L-glutamate binding site. H242 is a Fe(3+) binding site. Position 242 (H242) interacts with Zn(2+). Residue Q245 coordinates 4-imidazolone-5-propanoate. D317 is a Fe(3+) binding site. D317 serves as a coordination point for Zn(2+). N319 and G321 together coordinate N-formimidoyl-L-glutamate. 4-imidazolone-5-propanoate is bound at residue T322.

Belongs to the metallo-dependent hydrolases superfamily. HutI family. Requires Zn(2+) as cofactor. Fe(3+) serves as cofactor.

The protein localises to the cytoplasm. The enzyme catalyses 4-imidazolone-5-propanoate + H2O = N-formimidoyl-L-glutamate. It functions in the pathway amino-acid degradation; L-histidine degradation into L-glutamate; N-formimidoyl-L-glutamate from L-histidine: step 3/3. Its function is as follows. Catalyzes the hydrolytic cleavage of the carbon-nitrogen bond in imidazolone-5-propanoate to yield N-formimidoyl-L-glutamate. It is the third step in the universal histidine degradation pathway. In Aliivibrio fischeri (strain MJ11) (Vibrio fischeri), this protein is Imidazolonepropionase.